Here is a 434-residue protein sequence, read N- to C-terminus: N-acylneuraminate cytidylyltransferase (434 aa).

Methionine 1 carries the post-translational modification N-acetylmethionine. The interval 1 to 42 is disordered; it reads MDSVEKGAATSVSNPRGRPSRGRPPKLQRNSRGGQGRGVEKP. The BC1 motif motif lies at 15–31; the sequence is PRGRPSRGRPPKLQRNS. 2 positions are modified to omega-N-methylarginine: arginine 37 and arginine 52. The substrate site is built by arginine 52, asparagine 62, arginine 111, serine 120, serine 122, and glutamine 143. A BC2 motif motif is present at residues 200–206; it reads KRPRRQD. Arginine 201 is an active-site residue. Residues 269–276 carry the BC3 motif motif; it reads KEKLKEIK.

Belongs to the CMP-NeuNAc synthase family. Homotetramer; the active enzyme is formed by a dimer of dimers. As to expression, ubiquitously expressed. Expressed in pancreas, kidney, liver, skeletal muscle, lung, placenta, brain, heart, colon, PBL, small intestine, ovary, testis, prostate, thymus and spleen.

Its subcellular location is the nucleus. The catalysed reaction is an N-acylneuraminate + CTP = a CMP-N-acyl-beta-neuraminate + diphosphate. It functions in the pathway amino-sugar metabolism; N-acetylneuraminate metabolism. In terms of biological role, catalyzes the activation of N-acetylneuraminic acid (NeuNAc) to cytidine 5'-monophosphate N-acetylneuraminic acid (CMP-NeuNAc), a substrate required for the addition of sialic acid. Has some activity toward NeuNAc, N-glycolylneuraminic acid (Neu5Gc) or 2-keto-3-deoxy-D-glycero-D-galacto-nononic acid (KDN). In Homo sapiens (Human), this protein is N-acylneuraminate cytidylyltransferase (CMAS).